Consider the following 545-residue polypeptide: Cytochrome P450 10 (545 aa).

C493 contacts heme.

This sequence belongs to the cytochrome P450 family. It depends on heme as a cofactor. As to expression, abundantly expressed in the female gonadotropic hormone producing dorsal bodies.

May be involved in the synthesis of the female gonadotropic hormone produced by the dorsal bodies. This Lymnaea stagnalis (Great pond snail) protein is Cytochrome P450 10 (CYP10).